A 163-amino-acid chain; its full sequence is S-fimbrial adhesin protein SfaS (163 aa).

Residues 1–22 form the signal peptide; that stretch reads MKLKAIILATGLINCIAFSAQA. Cys38 and Cys75 are disulfide-bonded. Residues 138-144 are involved in sialic acid binding; the sequence is KARAVSK.

It belongs to the fimbrial protein family.

It localises to the fimbrium. In terms of biological role, fimbriae (also called pili), polar filaments radiating from the surface of the bacterium to a length of 0.5-1.5 micrometers and numbering 100-300 per cell, enable bacteria to colonize the epithelium of specific host organs. Its function is as follows. A minor fimbrial subunit, this protein is necessary for full expression of S-specific binding. S-fimbrial adhesins enable pathogenic E.coli causing urinary-tract infections or newborn meningitis to attach to glycoproteins terminating with alpha-sialic acid-(2-3)-beta-Gal. This protein binds to the alpha-sialic acid-(2-3)-beta-Gal and is thus responsible for erythrocyte recognition and hemagglutination. In Escherichia coli O6:K15:H31 (strain 536 / UPEC), this protein is S-fimbrial adhesin protein SfaS (sfaS).